The chain runs to 126 residues: Large ribosomal subunit protein uL22 (126 aa).

The protein belongs to the universal ribosomal protein uL22 family. Part of the 50S ribosomal subunit.

This protein binds specifically to 23S rRNA; its binding is stimulated by other ribosomal proteins, e.g. L4, L17, and L20. It is important during the early stages of 50S assembly. It makes multiple contacts with different domains of the 23S rRNA in the assembled 50S subunit and ribosome. In terms of biological role, the globular domain of the protein is located near the polypeptide exit tunnel on the outside of the subunit, while an extended beta-hairpin is found that lines the wall of the exit tunnel in the center of the 70S ribosome. The protein is Large ribosomal subunit protein uL22 of Caulobacter vibrioides (strain ATCC 19089 / CIP 103742 / CB 15) (Caulobacter crescentus).